Reading from the N-terminus, the 446-residue chain is N-succinylarginine dihydrolase (446 aa).

Residues Ala-19 to Ser-28, Asn-110, and His-137 to Arg-138 contribute to the substrate site. Glu-174 is an active-site residue. Arg-213 is a binding site for substrate. His-249 is an active-site residue. Residues Asp-251 and Asn-364 each contribute to the substrate site. Cys-370 (nucleophile) is an active-site residue.

It belongs to the succinylarginine dihydrolase family. Homodimer.

It catalyses the reaction N(2)-succinyl-L-arginine + 2 H2O + 2 H(+) = N(2)-succinyl-L-ornithine + 2 NH4(+) + CO2. It functions in the pathway amino-acid degradation; L-arginine degradation via AST pathway; L-glutamate and succinate from L-arginine: step 2/5. In terms of biological role, catalyzes the hydrolysis of N(2)-succinylarginine into N(2)-succinylornithine, ammonia and CO(2). This is N-succinylarginine dihydrolase from Burkholderia multivorans (strain ATCC 17616 / 249).